We begin with the raw amino-acid sequence, 213 residues long: Glutathione S-transferase (213 aa).

Positions 4-81 (AKPILYGAWI…YLEDKYPQHP (78 aa)) constitute a GST N-terminal domain. A GST C-terminal domain is found at 86-211 (DIKTKGLDLQ…LPQNQPDAPS (126 aa)).

It belongs to the GST superfamily. Zeta family.

The protein localises to the cytoplasm. The catalysed reaction is RX + glutathione = an S-substituted glutathione + a halide anion + H(+). Has a glutathione transferase activity with ethacrynic acid and nitrophenyl acetate. Has low glutathione peroxidase activity with cumene hydroperoxide. In Triticum aestivum (Wheat), this protein is Glutathione S-transferase (GSTZ1).